The chain runs to 686 residues: Translation initiation factor IF-2 (686 aa).

The segment at 54-105 (KPSVADEFEVEEKVVRSKKNSNKKKKKGKGNEDKRQENFAGRQQTQTVETPD) is disordered. A compositionally biased stretch (basic residues) spans 69–81 (RSKKNSNKKKKKG). The 170-residue stretch at 188 to 357 (ERPAVVTIMG…LLVSEVEEYK (170 aa)) folds into the tr-type G domain. Positions 197–204 (GHVDHGKT) are G1. Position 197-204 (197-204 (GHVDHGKT)) interacts with GTP. The segment at 222–226 (GITQH) is G2. The tract at residues 243–246 (DTPG) is G3. Residues 243–247 (DTPGH) and 297–300 (NKMD) each bind GTP. The interval 297-300 (NKMD) is G4. Residues 333–335 (SAI) are G5.

This sequence belongs to the TRAFAC class translation factor GTPase superfamily. Classic translation factor GTPase family. IF-2 subfamily.

The protein resides in the cytoplasm. Its function is as follows. One of the essential components for the initiation of protein synthesis. Protects formylmethionyl-tRNA from spontaneous hydrolysis and promotes its binding to the 30S ribosomal subunits. Also involved in the hydrolysis of GTP during the formation of the 70S ribosomal complex. The protein is Translation initiation factor IF-2 of Bacillus cereus (strain AH187).